A 349-amino-acid chain; its full sequence is B3 domain-containing protein At5g24050 (349 aa).

The segment at residues 240–341 (FNNLLRNDFL…ILCFAMEQSS (102 aa)) is a DNA-binding region (TF-B3).

It localises to the nucleus. In Arabidopsis thaliana (Mouse-ear cress), this protein is B3 domain-containing protein At5g24050.